The following is a 250-amino-acid chain: MSVTMREMLEAGVHFGHQTRFWNPKMAPFIFGHRNKIHIINLEKSLPMFQDAQKFVKQLASNGGTILMVGTKRQAREMVAAEAQRAGVPFVDQRWLGGMLTNFKTVKTSIKRLKEMKAQQEAGLEAMSKKEQLMFVRELEKLEKDIGGIQDMNSLPDAIFVIDVGFHKIAVAEAKKLGIPLVGVVDSNHNPEGIDYVIPGNDDSAKAVQLYAQGIADAILEGRAAALTDVVKAASGESGDEFVEVEESAA.

It belongs to the universal ribosomal protein uS2 family.

This chain is Small ribosomal subunit protein uS2, found in Delftia acidovorans (strain DSM 14801 / SPH-1).